Consider the following 496-residue polypeptide: Aminoacetaldehyde dehydrogenase (496 aa).

Leucine 166, tryptophan 168, lysine 192, serine 246, threonine 249, and tyrosine 256 together coordinate NADH. The active-site Proton acceptor is glutamate 268. An NADH-binding site is contributed by cysteine 269. The Nucleophile role is filled by cysteine 303. NADH contacts are provided by lysine 353 and glutamate 398.

Belongs to the aldehyde dehydrogenase family. Homotetramer, formed by two symmetrical dimers.

The catalysed reaction is aminoacetaldehyde + NAD(+) + H2O = glycine + NADH + 2 H(+). It catalyses the reaction 3-aminopropanal + NAD(+) + H2O = beta-alanine + NADH + 2 H(+). Its function is as follows. NAD(+)-dependent aminoaldehyde dehydrogenase highly efficient with protonated aminoacetaldehyde (ACTAL) and 3-aminopropanaldehyde (APAL). Likely participates in a still uncharacterized metabolic pathway present in proteobacteria species, in which ACTAL might be an intermediate, yielding glycine. Highly prefers NAD(+) over NADP(+). Shows very poor activity with acetaldehyde, propanaldehyde, butanaldehyde, pentanaldehyde, dimethylaminoacetaldehyde, trimethylaminoacetaldehyde (betaine aldehyde), trimethylaminobutanaldehyde, short aliphatic hydroxyaldehydes such as 3-hydroxypropanaldehyde and 2-hydroxypropanaldehyde (lactaldehyde), and aromatic aldehydes. This chain is Aminoacetaldehyde dehydrogenase, found in Pseudomonas aeruginosa (strain ATCC 15692 / DSM 22644 / CIP 104116 / JCM 14847 / LMG 12228 / 1C / PRS 101 / PAO1).